We begin with the raw amino-acid sequence, 458 residues long: tRNA-2-methylthio-N(6)-dimethylallyladenosine synthase (458 aa).

Residues 15 to 134 (KKVFIKTYGC…LPELLQQAQQ (120 aa)) form the MTTase N-terminal domain. [4Fe-4S] cluster contacts are provided by C24, C60, C97, C175, C179, and C182. The Radical SAM core domain maps to 161-393 (QKRGVSAFLT…QALLLDQQHR (233 aa)). The region spanning 396–457 (RSKIGQTTDV…SNSFVGEKAN (62 aa)) is the TRAM domain.

Belongs to the methylthiotransferase family. MiaB subfamily. As to quaternary structure, monomer. The cofactor is [4Fe-4S] cluster.

It is found in the cytoplasm. The catalysed reaction is N(6)-dimethylallyladenosine(37) in tRNA + (sulfur carrier)-SH + AH2 + 2 S-adenosyl-L-methionine = 2-methylsulfanyl-N(6)-dimethylallyladenosine(37) in tRNA + (sulfur carrier)-H + 5'-deoxyadenosine + L-methionine + A + S-adenosyl-L-homocysteine + 2 H(+). In terms of biological role, catalyzes the methylthiolation of N6-(dimethylallyl)adenosine (i(6)A), leading to the formation of 2-methylthio-N6-(dimethylallyl)adenosine (ms(2)i(6)A) at position 37 in tRNAs that read codons beginning with uridine. The sequence is that of tRNA-2-methylthio-N(6)-dimethylallyladenosine synthase from Bartonella bacilliformis (strain ATCC 35685 / KC583 / Herrer 020/F12,63).